A 77-amino-acid chain; its full sequence is Small ribosomal subunit protein uS4 (77 aa).

The tract at residues 45 to 77 is disordered; that stretch reads PFGGGRPGRVKRKNQKAAAKKASGGDGDEEDEE. Positions 52-63 are enriched in basic residues; sequence GRVKRKNQKAAA.

This sequence belongs to the universal ribosomal protein uS4 family.

In Nicotiana tabacum (Common tobacco), this protein is Small ribosomal subunit protein uS4 (RPS9).